We begin with the raw amino-acid sequence, 341 residues long: MKEKILLGGYTKRVSKGVYSVLLDSKKAELSALTEVAAVQNPTYITLDQKGHLYTCAADGNGGGIAAFDFDGQNTTHLGNVTSTGAPLCYVAVDEARQLVYGANYHLGEVRVYKIQADGSLRLTDTVKHNGSGPRPEQASSHVHYSDLTPDGRLVTCDLGTDEVTVYDVIGEGKLNIVTIYRAEKGMGARHISFHPNGKIAYLVGELNSTIEVLSYNEEKGRFARLQTISTLPEDYHGANGVAAIRISSDGKFLYASNRGHDSLAIYKVSPLGTKLESIGWTKTEGHIPRDFNFNKTEDYIIVAHQESDNLTLFLRDKNTGSLTLEQKDFYAPEITCVLPL.

A disordered region spans residues 125 to 146; it reads DTVKHNGSGPRPEQASSHVHYS.

Belongs to the cycloisomerase 2 family.

This is an uncharacterized protein from Lactococcus lactis subsp. cremoris (strain MG1363).